Here is a 497-residue protein sequence, read N- to C-terminus: Probable malate:quinone oxidoreductase (497 aa).

This sequence belongs to the MQO family. Requires FAD as cofactor.

The catalysed reaction is (S)-malate + a quinone = a quinol + oxaloacetate. It functions in the pathway carbohydrate metabolism; tricarboxylic acid cycle; oxaloacetate from (S)-malate (quinone route): step 1/1. This is Probable malate:quinone oxidoreductase from Wolinella succinogenes (strain ATCC 29543 / DSM 1740 / CCUG 13145 / JCM 31913 / LMG 7466 / NCTC 11488 / FDC 602W) (Vibrio succinogenes).